We begin with the raw amino-acid sequence, 377 residues long: Mitogen-activated protein kinase HOG1 (377 aa).

The 283-residue stretch at 23 to 305 folds into the Protein kinase domain; the sequence is YTELNPVGMG…AVEGLTHPYM (283 aa). ATP is bound by residues 29–37 and K52; that span reads VGMGAFGLV. Catalysis depends on D144, which acts as the Proton acceptor. Residue T174 is modified to Phosphothreonine. Positions 174-176 match the TXY motif; that stretch reads TGY. The residue at position 176 (Y176) is a Phosphotyrosine. Positions 354–377 are disordered; the sequence is NETEGSEQPDSQVEQNNLDSANGA. The segment covering 359–377 has biased composition (polar residues); sequence SEQPDSQVEQNNLDSANGA.

The protein belongs to the protein kinase superfamily. Ser/Thr protein kinase family. MAP kinase subfamily. HOG1 sub-subfamily. Mg(2+) is required as a cofactor. In terms of processing, dually phosphorylated on Thr-174 and Tyr-176, which activates the enzyme. Phosphorylated in response to oxidative and salt stress.

Its subcellular location is the cytoplasm. It is found in the nucleus. It carries out the reaction L-seryl-[protein] + ATP = O-phospho-L-seryl-[protein] + ADP + H(+). The catalysed reaction is L-threonyl-[protein] + ATP = O-phospho-L-threonyl-[protein] + ADP + H(+). Activated by tyrosine and threonine phosphorylation. In terms of biological role, proline-directed serine/threonine-protein kinase involved in a signal transduction pathway that is activated by changes in the osmolarity of the extracellular environment. Controls osmotic regulation of transcription of target genes. Regulates stress-induced production and accumulation of glycerol and D-arabitol. HOG1 is also involved in virulence, morphogenesis and oxidative stress response especially through its role in chlamydospore formation, an oxygen-dependent morphogenetic program. The chain is Mitogen-activated protein kinase HOG1 (HOG1) from Candida albicans (strain SC5314 / ATCC MYA-2876) (Yeast).